A 110-amino-acid chain; its full sequence is Large ribosomal subunit protein uL22 (110 aa).

This sequence belongs to the universal ribosomal protein uL22 family. As to quaternary structure, part of the 50S ribosomal subunit.

This protein binds specifically to 23S rRNA; its binding is stimulated by other ribosomal proteins, e.g. L4, L17, and L20. It is important during the early stages of 50S assembly. It makes multiple contacts with different domains of the 23S rRNA in the assembled 50S subunit and ribosome. In terms of biological role, the globular domain of the protein is located near the polypeptide exit tunnel on the outside of the subunit, while an extended beta-hairpin is found that lines the wall of the exit tunnel in the center of the 70S ribosome. This Shewanella amazonensis (strain ATCC BAA-1098 / SB2B) protein is Large ribosomal subunit protein uL22.